Here is a 357-residue protein sequence, read N- to C-terminus: UDP-N-acetylglucosamine--N-acetylmuramyl-(pentapeptide) pyrophosphoryl-undecaprenol N-acetylglucosamine transferase (357 aa).

UDP-N-acetyl-alpha-D-glucosamine is bound by residues 10 to 12 (TGG), Asn124, Ser189, Ile244, and Gln289.

The protein belongs to the glycosyltransferase 28 family. MurG subfamily.

The protein resides in the cell membrane. The enzyme catalyses Mur2Ac(oyl-L-Ala-gamma-D-Glu-L-Lys-D-Ala-D-Ala)-di-trans,octa-cis-undecaprenyl diphosphate + UDP-N-acetyl-alpha-D-glucosamine = beta-D-GlcNAc-(1-&gt;4)-Mur2Ac(oyl-L-Ala-gamma-D-Glu-L-Lys-D-Ala-D-Ala)-di-trans,octa-cis-undecaprenyl diphosphate + UDP + H(+). It functions in the pathway cell wall biogenesis; peptidoglycan biosynthesis. Cell wall formation. Catalyzes the transfer of a GlcNAc subunit on undecaprenyl-pyrophosphoryl-MurNAc-pentapeptide (lipid intermediate I) to form undecaprenyl-pyrophosphoryl-MurNAc-(pentapeptide)GlcNAc (lipid intermediate II). The sequence is that of UDP-N-acetylglucosamine--N-acetylmuramyl-(pentapeptide) pyrophosphoryl-undecaprenol N-acetylglucosamine transferase from Lactococcus lactis subsp. lactis (strain IL1403) (Streptococcus lactis).